A 584-amino-acid chain; its full sequence is Protein spire homolog 1 (584 aa).

Residues 1 to 30 form a disordered region; sequence MANTVEADGSNDEGYEAAEEGPEDEEDEKR. Positions 1 to 73 constitute a KIND domain; that stretch reads MANTVEADGS…RALFAETMEL (73 aa). Over residues 9-28 the composition is skewed to acidic residues; sequence GSNDEGYEAAEEGPEDEEDE. Residues 71–99 are a coiled coil; sequence MELHTFLAKVKSAKENLKKIQEMEKSDES. WH2 domains follow at residues 147-165 and 211-228; these read PYEM…LRKV and LHER…LRPV. Residues 224–238 are compositionally biased toward basic and acidic residues; the sequence is KLRPVSPEEIRRSRL. The segment at 224–366 is disordered; it reads KLRPVSPEEI…PTNVRQFLPP (143 aa). S229 carries the phosphoserine modification. A compositionally biased stretch (polar residues) spans 242 to 272; sequence TPESTKNLMESSMVNGGLTSQTKENGLSSAE. S292, S293, and S295 each carry phosphoserine. Residues 302–320 are compositionally biased toward low complexity; it reads KSTSSSSVSPSFPEEPVLE. T337 bears the Phosphothreonine mark. Residues 340 to 356 are compositionally biased toward basic and acidic residues; sequence PERRQPPQRRHSIEKET. The span at 357–366 shows a compositional bias: polar residues; the sequence is PTNVRQFLPP. Positions 384 to 404 are spir-box; that stretch reads LALTVEEVMHIRQVLVKAELE. 3 positions are modified to phosphoserine: S506, S510, and S563.

Belongs to the spire family. Interacts with FMN2.

The protein resides in the cytoplasm. It is found in the cytoskeleton. The protein localises to the cytosol. Its subcellular location is the cleavage furrow. It localises to the perinuclear region. The protein resides in the cell membrane. It is found in the cytoplasmic vesicle membrane. Its function is as follows. Acts as an actin nucleation factor, remains associated with the slow-growing pointed end of the new filament. Involved in intracellular vesicle transport along actin fibers, providing a novel link between actin cytoskeleton dynamics and intracellular transport. Required for asymmetric spindle positioning and asymmetric cell division during meiosis. Required for normal formation of the cleavage furrow and for polar body extrusion during female germ cell meiosis. Also acts in the nucleus: together with FMN2, promotes assembly of nuclear actin filaments in response to DNA damage in order to facilitate movement of chromatin and repair factors after DNA damage. In addition, promotes innate immune signaling downstream of dsRNA sensing. Mechanistically, contributes to IRF3 phosphorylation and activation downstream of MAVS and upstream of TBK1. The sequence is that of Protein spire homolog 1 (SPIRE1) from Macaca fascicularis (Crab-eating macaque).